The following is a 241-amino-acid chain: ATP synthase subunit a (241 aa).

The next 5 helical transmembrane spans lie at 30–50 (GQVFLTSWILLGSLLVFISLG), 91–111 (FIGTLFLFVFVSNWGGALIPW), 128–148 (INTTIALALLVSLSYFYAGLS), 193–213 (LVVGVLVFLVPLVLPIPVMFL), and 214–234 (GLFTSAIQALIFATLAAYYIG).

Belongs to the ATPase A chain family. F-type ATPases have 2 components, CF(1) - the catalytic core - and CF(0) - the membrane proton channel. CF(1) has five subunits: alpha(3), beta(3), gamma(1), delta(1), epsilon(1). CF(0) has four main subunits: a, b, b' and c.

The protein resides in the cellular thylakoid membrane. In terms of biological role, key component of the proton channel; it plays a direct role in the translocation of protons across the membrane. This Prochlorococcus marinus (strain MIT 9515) protein is ATP synthase subunit a.